Reading from the N-terminus, the 157-residue chain is Crossover junction endodeoxyribonuclease RuvC (157 aa).

Catalysis depends on residues Asp-7, Glu-70, and Asp-142. Positions 7, 70, and 142 each coordinate Mg(2+).

The protein belongs to the RuvC family. As to quaternary structure, homodimer which binds Holliday junction (HJ) DNA. The HJ becomes 2-fold symmetrical on binding to RuvC with unstacked arms; it has a different conformation from HJ DNA in complex with RuvA. In the full resolvosome a probable DNA-RuvA(4)-RuvB(12)-RuvC(2) complex forms which resolves the HJ. Mg(2+) is required as a cofactor.

Its subcellular location is the cytoplasm. It carries out the reaction Endonucleolytic cleavage at a junction such as a reciprocal single-stranded crossover between two homologous DNA duplexes (Holliday junction).. Functionally, the RuvA-RuvB-RuvC complex processes Holliday junction (HJ) DNA during genetic recombination and DNA repair. Endonuclease that resolves HJ intermediates. Cleaves cruciform DNA by making single-stranded nicks across the HJ at symmetrical positions within the homologous arms, yielding a 5'-phosphate and a 3'-hydroxyl group; requires a central core of homology in the junction. The consensus cleavage sequence is 5'-(A/T)TT(C/G)-3'. Cleavage occurs on the 3'-side of the TT dinucleotide at the point of strand exchange. HJ branch migration catalyzed by RuvA-RuvB allows RuvC to scan DNA until it finds its consensus sequence, where it cleaves and resolves the cruciform DNA. This Synechococcus sp. (strain RCC307) protein is Crossover junction endodeoxyribonuclease RuvC.